The primary structure comprises 2450 residues: Tetratricopeptide repeat protein 28 (2450 aa).

Methionine 1 carries the post-translational modification N-acetylmethionine. The tract at residues 1-36 (MEQPPPLAPEPASARSRRRREPESPPAPIPLFGART) is disordered. Serine 24 bears the Phosphoserine mark. 28 TPR repeats span residues 52–85 (FVEKVRQSNQACHDGDFHTAIVLYNEALAVDPQN), 87–119 (ILYSNRSAAYMKTQQYHKALDDAIKARLLNPKW), 120–153 (PKAYFRQGVALQYLGRHADALAAFASGLAQDPKS), 190–223 (FVVVSVVGQELLTAGHHGASVVVLEAALKIGTCS), 228–261 (GSVFSALSSAHWSLGNTEKSTGYMQQDLDVAKTL), 268–301 (CRAHGNLGSAFFSKGNYREALTNHRHQLVLAMKL), 308–341 (SSALSSLGHVYTAIGDYPNALASHKQCVLLAKQS), 348–381 (ARELGNMGAVYIAMGDFENAVQCHEQHLRIAKDL), 388–421 (ARAYSNLGSAYHYRRNFDKAMSYHNCVLELAQEL), 428–461 (MRAYAGLGHAARCMQDLERAKQYHEQQLGIAEDL), 468–501 (GRASSNLGIIHQMKGDYDTALKLHKTHLCIAQEL), 508–541 (GRAYGNMGNAYNALGMYDQAVKYHRQELQISMEV), 548–581 (ASTHGNLAVAYQALGAHDRALQHYQNHLNIAREL), 588–621 (ARALSNLGNFHCSRGEYVQAAPYYEQYLRLAPDL), 628–661 (GKVCHNLGYAHYCLGNYQEAVKYYEQDLALAKDL), 668–701 (AKAYCNLGLAFKALLNFAKAEECQKYLLSLAQSL), 708–741 (FRALGNLGDIFICKKDINGAIKFYEQQLGLSHHV), 748–781 (ASAYAALGTAYRMVQKYDKALGYHTQELEVYQEL), 788–821 (CRAHGHLAAVYMALGKYTMAFKCYQEQLELGRKL), 828–861 (AQVYGNMGITKMNMNVMEDAIGYFEQQLAMLQQL), 871–904 (GRAYGNLGDCYEALGDYEEAIKYYEQYLSVAQSL), 911–944 (AKAYRGLGNGHRATGSLQQALVCFEKRLVVAHEL), 951–984 (AQAYGELGSLHSQLGNYEQAISCLERQLNIARDM), 991–1024 (SDAACGLGGVYQQMGEYDTALQYHQLDLQIAEET), 1031–1064 (GRAYGNLGLTYESLGTFERAVVYQEQHLSIAAQM), 1071–1104 (TVSYSSLGRTHHALQNYSQAVMYLQEGLRLAEQL), 1111–1144 (AKIRHGLGLSLWASGNLEEAQHQLYRASALFETI), and 1163–1196 (TSSYQALQRVLVSLGHHDEALAVAERGRTRAFAD). Residues 1362 to 1381 (SGTVSPSKDGTSSLPRRQNS) form a disordered region. 2 positions are modified to phosphoserine: serine 1584 and serine 2098. The tract at residues 2001 to 2364 (KPEGGLEGGG…GTLTSKRDVL (364 aa)) is disordered. Residues 2090 to 2116 (SVSSKGSVSTPNSPVKMTLIPSPNSPF) show a composition bias toward polar residues. Low complexity predominate over residues 2124 to 2140 (SSDTGESDQSSTETDST). The segment covering 2143-2153 (SQEESTPKLDP) has biased composition (basic and acidic residues). Polar residues predominate over residues 2191–2206 (APSSTTVFRASETSAF). Serine 2216 carries the post-translational modification Phosphoserine. The segment covering 2229–2245 (ARSSSLPKVSSPATSEV) has biased composition (polar residues). Composition is skewed to low complexity over residues 2252–2262 (SPPGSSHPSPG) and 2296–2320 (SPACSAPSPALSYSSAGSARSSPAD). 2 positions are modified to phosphoserine: serine 2365 and serine 2370.

As to quaternary structure, interacts with AURKB. In terms of tissue distribution, expressed in embryos at all stages examined. In adult tissues, detected in heart and at low levels in kidney and testis.

The protein resides in the cytoplasm. Its subcellular location is the cytoskeleton. It localises to the microtubule organizing center. The protein localises to the centrosome. It is found in the spindle. The protein resides in the spindle pole. Its subcellular location is the midbody. In terms of biological role, during mitosis, may be involved in the condensation of spindle midzone microtubules, leading to the formation of midbody. Functionally, essential for the formation and integrity of the midbody. Max play a critical role in the progress of mitosis and cytokinesis during cell cycle. In Mus musculus (Mouse), this protein is Tetratricopeptide repeat protein 28 (Ttc28).